Here is a 179-residue protein sequence, read N- to C-terminus: Inner membrane-spanning protein YciB (179 aa).

Transmembrane regions (helical) follow at residues 11-31 (ILFFAVYKLQGIQAAAITLII), 52-69 (LIMGSAVVFFGSLSAYFN), 71-91 (LEFLKWKVTVVYALFSLILLV), 121-141 (LGWAVFFLLCMLINLYISQYL), and 149-169 (FKTFGILGMTLIATLVTGVYI).

It belongs to the YciB family.

Its subcellular location is the cell inner membrane. In terms of biological role, plays a role in cell envelope biogenesis, maintenance of cell envelope integrity and membrane homeostasis. This chain is Inner membrane-spanning protein YciB, found in Histophilus somni (strain 129Pt) (Haemophilus somnus).